Here is a 249-residue protein sequence, read N- to C-terminus: MAPHPGKLKPATKAVHVRDLARRFATKTILDGVDLDIEEGEFVALLGRSGSGKSTFLRALAGLDHGVEGTGTLETPESLSVVFQDARLLPWRTVIQNVTLGLTGASGQEAGRKALAEVGLAGRETAWPNQLSGGEQQRVALARSLVREPALLLADEPFGALDALTRLKMHDLLRELCARHRPAVLLVTHDVDEAISLADRILVLDEGRLIEDLKIDLPTPRDHGDPRFAQFRIQLLSRLGVELPGRKAA.

One can recognise an ABC transporter domain in the interval Val-15–Phe-231. Gly-47–Ser-54 lines the ATP pocket.

This sequence belongs to the ABC transporter superfamily. Aliphatic sulfonates importer (TC 3.A.1.17.2) family. As to quaternary structure, the complex is composed of two ATP-binding proteins (SsuB), two transmembrane proteins (SsuC) and a solute-binding protein (SsuA).

The protein localises to the cell inner membrane. It catalyses the reaction ATP + H2O + aliphatic sulfonate-[sulfonate-binding protein]Side 1 = ADP + phosphate + aliphatic sulfonateSide 2 + [sulfonate-binding protein]Side 1.. Part of the ABC transporter complex SsuABC involved in aliphatic sulfonates import. Responsible for energy coupling to the transport system. This Rhizobium johnstonii (strain DSM 114642 / LMG 32736 / 3841) (Rhizobium leguminosarum bv. viciae) protein is Aliphatic sulfonates import ATP-binding protein SsuB 2.